The sequence spans 146 residues: Hemoglobin subunit delta (146 aa).

One can recognise a Globin domain in the interval His2–His146. Position 50 is a phosphoserine (Ser50). 2 residues coordinate heme b: His63 and His92.

Belongs to the globin family. As to quaternary structure, heterotetramer of two delta chains and two alpha chains. In terms of tissue distribution, red blood cells.

The chain is Hemoglobin subunit delta (HBD) from Aotus trivirgatus (Three-striped night monkey).